A 124-amino-acid chain; its full sequence is MTYNYLLILIIIYVIKIICRYFKQKNELQMESKTNLDSSKLVDPINQVNQINQVNQVNQTNQTDKIIVSFRGDKYDITDFLRKHPGGKNILIKNNGKDIEELMAEYEHSKNAYLILSKYKITEK.

The chain crosses the membrane as a helical span at residues 5-22 (YLLILIIIYVIKIICRYF). The 76-residue stretch at 49 to 124 (NQINQVNQVN…ILSKYKITEK (76 aa)) folds into the Cytochrome b5 heme-binding domain. Heme contacts are provided by histidine 84 and histidine 108.

Belongs to the cytochrome b5 family.

The protein localises to the membrane. Its function is as follows. Membrane bound hemoprotein which function as an electron carrier for several membrane bound oxygenases. In Acanthamoeba polyphaga (Amoeba), this protein is Cytochrome b5-like protein.